The primary structure comprises 1476 residues: MEGGKGPRLRDFLSGSLATWALGLAGLVGEAEDSEGEEEEEEEEPPLWLEKRFLRLSDGALLLRVLGIIAPSSRGGPRMLRGLDGPAAWRVWNLNHLWGRLRDFYQEELQLLILSPPPDLQTLGFDPLSEEAVEQLEGVLRLLLGASVQCEHRELFIRHIQGLSLEVQSELAAAIQEVTQPGAGVVLALSGPDPGELAPAELEMLSRSLMGTLSKLARERDLGAQRLAELLLEREPLCLRPEAPSRAPAEGPSHHLALQLANAKAQLRRLRQELEEKAELLLDSQAEVQGLEAEIRRLRQEAQALSGQAKRAELYREEAEALRERAGRLPRLQEELRRCRERLQAAEAYKSQLEEERVLSGVLEASKALLEEQLEAARERCARLHETQRENLLLRTRLGEAHAELDSLRHQVDQLAEENVELELELQRSLEPPPGSPGEAPLAGAAPSLQDEVREAEAGRLRTLERENRELRGLLQVLQGQPGGQHPLLEAPREDPVLPVLEEAPQTPVAFDHSPQGLVQKARDGGPQALDLAPPALDSVLEASAECPQAPDSDPQEAESPLQAAAMDPQASDWSPQESGSPVETQESPEKAGRRSSLQSPASVAPPQGPGTKIQAPQLLGGETEGREAPQGELVPEAWGLRQEGPEHKPGPSEPSSVQLEEQEGPNQGLDLATGQAEAREHDQRLEGTVRDPAWQKPQQKSEGALEVQVWEGPIPGESLASGVAEQEALREEVAQLRRKAEALGDELEAQARKLEAQNTEAARLSKELAQARRAEAEAHREAEAQAWEQARLREAVEAAGQELESASQEREALVEALAAAGRERRQWEREGSRLRAQSEAAEERMQVLESEGRQHLEEAERERREKEALQAELEKAVVRGKELGDRLEHLQRELEQAALERQEFLREKESQHQRYQGLEQRLEAELQAAATSKEEALMELKTRALQLEEELFQLRQGPAGLGPKKRAEPQLVETQNVRLIEVERSNAMLVAEKAALQGQLQHLEGQLGSLQGRAQELLLQSQRAQEHSSRLQAEKSVLEIQGQELHRKLEVLEEEVRAARQSQEETRGQQQALLRDHKALAQLQRRQEAELEGLLVRHRDLKANMRALELAHRELQGRHEQLQAQRASVEAQEVALLAERERLMQDGHRQRGLEEELRRLQSEHDRAQMLLAELSRERGELQGERGELRGRLARLELERAQLEMQSQQLRESNQQLDLSACRLTTQCELLTQLRSAQEEENRQLLAEVQALSRENRELLERSLESRDHLHREQREYLDQLNALRREKQKLVEKIMDQYRVLEPVPLPRTKKGSWLADKVKRLMRPRREGGPPGGLRLGADGAGSTESLGGPPETELPEGREADGTGSPSPAPMRRAQSSLCLRDETLAGGQRRKLSSRFPVGRSSESFSPGDTPRQRFRQRHPGPLGAPVSHSKGPGVGWENSAETLQEHETDANREGPEVQEPEKRPLTPSLSQ.

Positions 253–481 (SHHLALQLAN…RGLLQVLQGQ (229 aa)) form a coiled coil. Disordered regions lie at residues 427–451 (QRSLEPPPGSPGEAPLAGAAPSLQD), 509–706 (VAFD…EGAL), 825–866 (RRQW…ERRE), and 1323–1476 (LMRP…SLSQ). Residue Ser436 is modified to Phosphoserine. The span at 572-586 (SDWSPQESGSPVETQ) shows a compositional bias: polar residues. Residue Ser596 is modified to Phosphoserine. Composition is skewed to basic and acidic residues over residues 678–690 (EAREHDQRLEGTV), 825–834 (RRQWEREGSR), and 842–866 (AEERMQVLESEGRQHLEEAERERRE). The stretch at 720–1303 (LASGVAEQEA…KIMDQYRVLE (584 aa)) forms a coiled coil. Ser1348 and Ser1379 each carry phosphoserine. Basic and acidic residues predominate over residues 1448–1469 (LQEHETDANREGPEVQEPEKRP).

It belongs to the CCDC88 family. As to quaternary structure, homodimer. Interacts with DOCK8. Interacts (via C-terminus) with intact microtubules. Interacts with dynein-dynactin motor complex. Interacts (via C-terminus) with HSPA5. Expressed in endothelium (at protein level). Expressed in NK cells (at protein level).

The protein localises to the membrane. It localises to the cytoplasm. The protein resides in the cytoskeleton. Its subcellular location is the microtubule organizing center. It is found in the endoplasmic reticulum. The protein localises to the golgi apparatus. In terms of biological role, acts as a positive regulator of T-cell maturation and inflammatory function. Required for several functions of T-cells, in both the CD4(+) and the CD8(+) compartments and this includes expression of cell surface markers of activation, proliferation, and cytokine production in response to specific or non-specific stimulation. Enhances NK cell cytotoxicity by positively regulating polarization of microtubule-organizing center (MTOC) to cytotoxic synapse, lytic granule transport along microtubules, and dynein-mediated clustering to MTOC. Interacts with HSPA5 and stabilizes the interaction between HSPA5 and ERN1, leading to suppression of ERN1-induced JNK activation and endoplasmic reticulum stress-induced apoptosis. The polypeptide is Coiled-coil domain-containing protein 88B (CCDC88B) (Homo sapiens (Human)).